Consider the following 393-residue polypeptide: NAD(P)H-quinone oxidoreductase subunit H, chloroplastic (393 aa).

This sequence belongs to the complex I 49 kDa subunit family. In terms of assembly, NDH is composed of at least 16 different subunits, 5 of which are encoded in the nucleus.

Its subcellular location is the plastid. It is found in the chloroplast thylakoid membrane. It catalyses the reaction a plastoquinone + NADH + (n+1) H(+)(in) = a plastoquinol + NAD(+) + n H(+)(out). It carries out the reaction a plastoquinone + NADPH + (n+1) H(+)(in) = a plastoquinol + NADP(+) + n H(+)(out). In terms of biological role, NDH shuttles electrons from NAD(P)H:plastoquinone, via FMN and iron-sulfur (Fe-S) centers, to quinones in the photosynthetic chain and possibly in a chloroplast respiratory chain. The immediate electron acceptor for the enzyme in this species is believed to be plastoquinone. Couples the redox reaction to proton translocation, and thus conserves the redox energy in a proton gradient. The sequence is that of NAD(P)H-quinone oxidoreductase subunit H, chloroplastic from Olimarabidopsis pumila (Dwarf rocket).